The primary structure comprises 331 residues: MLVLGIESTAHTLGVGIAKDQPPYILANERDTFVPKEGGMKPGDLLKHHAEVSGTILRRALEKANISINDINYIAVALGPGIGPALRVGATLARALSLKYNKKLVPVNHGIGHIEIGYLTTEAKDPLILYLSGGNTIITTFYKGRFRIFGETLDIALGNMMDVFVREVNLAPPYIINGKHAIDICSEKGSKLLKLPYVVKGQDMSFSGLLTAALRLVGKEKLEDICYSIREIAFDMLLEATERALALTSKKELMIVGGVAASVSLRKKLEELGKEWDVQIKIVPPEFAGDNGAMIAYAGMLAASKGVFIDVDKSYIRPRWRVDEVDIPWRN.

Fe cation contacts are provided by His-109, His-113, and Tyr-130. Substrate contacts are provided by residues 130–134, Asp-162, Asp-183, and Ser-262; that span reads YLSGG. Asp-290 contacts Fe cation.

This sequence belongs to the KAE1 / TsaD family. Fe(2+) is required as a cofactor.

The protein localises to the cytoplasm. The enzyme catalyses L-threonylcarbamoyladenylate + adenosine(37) in tRNA = N(6)-L-threonylcarbamoyladenosine(37) in tRNA + AMP + H(+). In terms of biological role, required for the formation of a threonylcarbamoyl group on adenosine at position 37 (t(6)A37) in tRNAs that read codons beginning with adenine. Is probably involved in the transfer of the threonylcarbamoyl moiety of threonylcarbamoyl-AMP (TC-AMP) to the N6 group of A37. This chain is tRNA N6-adenosine threonylcarbamoyltransferase, found in Saccharolobus islandicus (strain M.16.27) (Sulfolobus islandicus).